A 466-amino-acid chain; its full sequence is Gamma-aminobutyric acid permease (466 aa).

Residues Gly2–Thr20 lie on the Cytoplasmic side of the membrane. The next 2 helical transmembrane spans lie at Met21–Ala41 and Glu42–Met62. The Cytoplasmic portion of the chain corresponds to Arg63–Trp96. Residues Leu97–Leu117 form a helical membrane-spanning segment. Position 118 (His118) is a topological domain, periplasmic. The helical transmembrane segment at Ser119–Gly139 threads the bilayer. The Cytoplasmic portion of the chain corresponds to Ser140–Phe153. Residues Trp154 to Ile174 traverse the membrane as a helical segment. Residues Ser175 to Gly199 are Periplasmic-facing. The chain crosses the membrane as a helical span at residues Phe200–Val220. Residues Thr221–Ser246 lie on the Cytoplasmic side of the membrane. A helical membrane pass occupies residues Ile247–Leu267. At Lys268–Lys286 the chain is on the periplasmic side. The chain crosses the membrane as a helical span at residues Leu287 to Thr307. Topologically, residues Ala308–Pro334 are cytoplasmic. Residues Tyr335 to Ala355 traverse the membrane as a helical segment. Residues Pro356 to Lys358 lie on the Periplasmic side of the membrane. A helical transmembrane segment spans residues Val359–Ala379. At Val380 to Leu402 the chain is on the cytoplasmic side. Residues Tyr403 to Phe423 traverse the membrane as a helical segment. Topologically, residues Arg424–Gln428 are periplasmic. The helical transmembrane segment at Leu429–Ala449 threads the bilayer. Residues Arg450–Arg466 are Cytoplasmic-facing.

This sequence belongs to the amino acid-polyamine-organocation (APC) superfamily. Amino acid transporter (AAT) (TC 2.A.3.1) family. In terms of assembly, monomer.

It is found in the cell inner membrane. It catalyses the reaction 4-aminobutanoate(in) + H(+)(in) = 4-aminobutanoate(out) + H(+)(out). It functions in the pathway amino-acid degradation; 4-aminobutanoate degradation. Uptake is stimulated by ammonium sulfate and abolished by 2,4-dinitrophenol. Is affected both topologically and kinetically by phospholipid composition of the membrane. In cells lacking phosphatidylethanolamine (PE), the N-terminal hairpin is inverted relative to the membrane and the rate of GABA transport is reduced by more than 99%. Transporter for gamma-aminobutyrate (GABA). Transport is driven by the membrane potential. Can also transport a number of GABA analogs such as nipecotic acid or muscimol. This Escherichia coli (strain K12) protein is Gamma-aminobutyric acid permease.